The primary structure comprises 343 residues: Glyceraldehyde-3-phosphate dehydrogenase (343 aa).

Residues T11–I12 and G110 contribute to the NAD(+) site. S139 to N141 contributes to the D-glyceraldehyde 3-phosphate binding site. Residue C140 is the Nucleophile of the active site. R168 serves as a coordination point for NAD(+). A D-glyceraldehyde 3-phosphate-binding site is contributed by H194 to G195. Position 301 (Q301) interacts with NAD(+).

This sequence belongs to the glyceraldehyde-3-phosphate dehydrogenase family. In terms of assembly, homotetramer.

It is found in the cytoplasm. It catalyses the reaction D-glyceraldehyde 3-phosphate + phosphate + NADP(+) = (2R)-3-phospho-glyceroyl phosphate + NADPH + H(+). The catalysed reaction is D-glyceraldehyde 3-phosphate + phosphate + NAD(+) = (2R)-3-phospho-glyceroyl phosphate + NADH + H(+). Its pathway is carbohydrate degradation; glycolysis; pyruvate from D-glyceraldehyde 3-phosphate: step 1/5. The chain is Glyceraldehyde-3-phosphate dehydrogenase from Methanoregula boonei (strain DSM 21154 / JCM 14090 / 6A8).